The chain runs to 87 residues: Small ribosomal subunit protein bS20 (87 aa).

The interval 1 to 26 is disordered; that stretch reads MANHKSAIKRHKQSQKRAARNRAAKT.

It belongs to the bacterial ribosomal protein bS20 family.

In terms of biological role, binds directly to 16S ribosomal RNA. The chain is Small ribosomal subunit protein bS20 from Nitratidesulfovibrio vulgaris (strain DSM 19637 / Miyazaki F) (Desulfovibrio vulgaris).